The following is a 580-amino-acid chain: 2-succinyl-5-enolpyruvyl-6-hydroxy-3-cyclohexene-1-carboxylate synthase (580 aa).

The protein belongs to the TPP enzyme family. MenD subfamily. As to quaternary structure, homodimer. Mg(2+) is required as a cofactor. Requires Mn(2+) as cofactor. Thiamine diphosphate serves as cofactor.

It catalyses the reaction isochorismate + 2-oxoglutarate + H(+) = 5-enolpyruvoyl-6-hydroxy-2-succinyl-cyclohex-3-ene-1-carboxylate + CO2. The protein operates within quinol/quinone metabolism; 1,4-dihydroxy-2-naphthoate biosynthesis; 1,4-dihydroxy-2-naphthoate from chorismate: step 2/7. It functions in the pathway quinol/quinone metabolism; menaquinone biosynthesis. Its function is as follows. Catalyzes the thiamine diphosphate-dependent decarboxylation of 2-oxoglutarate and the subsequent addition of the resulting succinic semialdehyde-thiamine pyrophosphate anion to isochorismate to yield 2-succinyl-5-enolpyruvyl-6-hydroxy-3-cyclohexene-1-carboxylate (SEPHCHC). This Listeria monocytogenes serovar 1/2a (strain ATCC BAA-679 / EGD-e) protein is 2-succinyl-5-enolpyruvyl-6-hydroxy-3-cyclohexene-1-carboxylate synthase.